The sequence spans 266 residues: Imidazole glycerol phosphate synthase subunit HisF (266 aa).

Active-site residues include aspartate 11 and aspartate 130.

The protein belongs to the HisA/HisF family. In terms of assembly, heterodimer of HisH and HisF.

Its subcellular location is the cytoplasm. The catalysed reaction is 5-[(5-phospho-1-deoxy-D-ribulos-1-ylimino)methylamino]-1-(5-phospho-beta-D-ribosyl)imidazole-4-carboxamide + L-glutamine = D-erythro-1-(imidazol-4-yl)glycerol 3-phosphate + 5-amino-1-(5-phospho-beta-D-ribosyl)imidazole-4-carboxamide + L-glutamate + H(+). Its pathway is amino-acid biosynthesis; L-histidine biosynthesis; L-histidine from 5-phospho-alpha-D-ribose 1-diphosphate: step 5/9. IGPS catalyzes the conversion of PRFAR and glutamine to IGP, AICAR and glutamate. The HisF subunit catalyzes the cyclization activity that produces IGP and AICAR from PRFAR using the ammonia provided by the HisH subunit. The polypeptide is Imidazole glycerol phosphate synthase subunit HisF (Delftia acidovorans (strain DSM 14801 / SPH-1)).